The sequence spans 270 residues: Phosphate import ATP-binding protein PstB 2 (270 aa).

Positions 25 to 265 (LQAKDINIYY…PEKKQTEDYI (241 aa)) constitute an ABC transporter domain. 57–64 (GPSGCGKS) contacts ATP.

It belongs to the ABC transporter superfamily. Phosphate importer (TC 3.A.1.7) family. The complex is composed of two ATP-binding proteins (PstB), two transmembrane proteins (PstC and PstA) and a solute-binding protein (PstS).

The protein localises to the cell membrane. The catalysed reaction is phosphate(out) + ATP + H2O = ADP + 2 phosphate(in) + H(+). Its function is as follows. Part of the ABC transporter complex PstSACB involved in phosphate import. Responsible for energy coupling to the transport system. The sequence is that of Phosphate import ATP-binding protein PstB 2 from Shouchella clausii (strain KSM-K16) (Alkalihalobacillus clausii).